We begin with the raw amino-acid sequence, 277 residues long: Soluble NSF attachment protein 29 (277 aa).

The span at 1–11 (MSRNPFDDDYR) shows a compositional bias: basic and acidic residues. Disordered regions lie at residues 1 to 30 (MSRN…MGHY), 49 to 73 (ESLD…STAQ), and 117 to 170 (KFTK…ESSR). A compositionally biased stretch (polar residues) spans 14-28 (AASSTMPVKSYTTMG). The t-SNARE coiled-coil homology 1 domain occupies 44–106 (EKTLQESLDS…QMTQRNLNSL (63 aa)). The segment covering 49-65 (ESLDSTERSRRHLENSE) has biased composition (basic and acidic residues). Polar residues predominate over residues 134 to 170 (SKSASRLSETATNLSSGGGSATFSGPSGQRTLTESSR). One can recognise a t-SNARE coiled-coil homology 2 domain in the interval 179–241 (EAMDNQIDEN…RDQDKQMQKI (63 aa)).

This sequence belongs to the SNAP-25 family.

The protein localises to the synapse. It is found in the synaptosome. Functionally, SNAREs, soluble N-ethylmaleimide-sensitive factor-attachment protein receptors, are essential proteins for fusion of cellular membranes. SNAREs localized on opposing membranes assemble to form a trans-SNARE complex, an extended, parallel four alpha-helical bundle that drives membrane fusion. Plays a role in the processing and secretion of the aspartic protease hrg-7 from the intestine. This Caenorhabditis elegans protein is Soluble NSF attachment protein 29.